A 55-amino-acid chain; its full sequence is Neurotoxin BmP08 (55 aa).

The N-terminal stretch at 1–23 is a signal peptide; it reads MKIFFAVLVILVLFSMLIWTAYG. Intrachain disulfides connect Cys30/Cys45, Cys36/Cys50, and Cys39/Cys53.

In terms of tissue distribution, expressed by the venom gland.

Its subcellular location is the secreted. The polypeptide is Neurotoxin BmP08 (Olivierus martensii (Manchurian scorpion)).